Reading from the N-terminus, the 205-residue chain is Recombination protein RecR (205 aa).

The C4-type zinc finger occupies 59 to 74; that stretch reads CARCNTFCEGGLCDIC. The Toprim domain maps to 82–177; it reads RRLMVVHMPA…KVSRLSQGIP (96 aa).

This sequence belongs to the RecR family.

Its function is as follows. May play a role in DNA repair. It seems to be involved in an RecBC-independent recombinational process of DNA repair. It may act with RecF and RecO. This is Recombination protein RecR from Neisseria meningitidis serogroup A / serotype 4A (strain DSM 15465 / Z2491).